Consider the following 568-residue polypeptide: DNA mismatch repair protein MutL (568 aa).

It belongs to the DNA mismatch repair MutL/HexB family.

Functionally, this protein is involved in the repair of mismatches in DNA. It is required for dam-dependent methyl-directed DNA mismatch repair. May act as a 'molecular matchmaker', a protein that promotes the formation of a stable complex between two or more DNA-binding proteins in an ATP-dependent manner without itself being part of a final effector complex. This Thermosipho africanus (strain TCF52B) protein is DNA mismatch repair protein MutL.